Consider the following 941-residue polypeptide: Translation initiation factor IF-2 (941 aa).

A compositionally biased stretch (basic and acidic residues) spans 170–209; the sequence is DAQKAEVDAQKAEAEKPVEVKADESAIEEKKRVAAEESKK. 2 disordered regions span residues 170-228 and 252-351; these read DAQK…KAAA and RAIK…SNFQ. Positions 256–269 are enriched in low complexity; it reads APEPVAPVAKPAAE. Residues 271–297 are compositionally biased toward basic and acidic residues; the sequence is TLHKPADKKPGEKKDEKKPAVTADKKS. Residues 299-308 show a composition bias toward polar residues; it reads KSANVSSTWQ. The region spanning 441–610 is the tr-type G domain; the sequence is PRAPVVTVMG…LLQAEVLELK (170 aa). Residues 450–457 form a G1 region; sequence GHVDHGKT. 450-457 lines the GTP pocket; sequence GHVDHGKT. A G2 region spans residues 475–479; that stretch reads GITQH. The interval 496 to 499 is G3; that stretch reads DTPG. GTP-binding positions include 496–500 and 550–553; these read DTPGH and NKID. A G4 region spans residues 550 to 553; the sequence is NKID. The segment at 586 to 588 is G5; the sequence is SAK.

Belongs to the TRAFAC class translation factor GTPase superfamily. Classic translation factor GTPase family. IF-2 subfamily.

Its subcellular location is the cytoplasm. Functionally, one of the essential components for the initiation of protein synthesis. Protects formylmethionyl-tRNA from spontaneous hydrolysis and promotes its binding to the 30S ribosomal subunits. Also involved in the hydrolysis of GTP during the formation of the 70S ribosomal complex. In Herminiimonas arsenicoxydans, this protein is Translation initiation factor IF-2.